The sequence spans 127 residues: Small integral membrane protein 33 (127 aa).

An N-linked (GlcNAc...) asparagine glycan is attached at N15. Residues 38–58 traverse the membrane as a helical segment; the sequence is PLLAAIIAAFVLLAICIVLAV.

The protein resides in the membrane. This is Small integral membrane protein 33 from Mus musculus (Mouse).